Here is a 324-residue protein sequence, read N- to C-terminus: Lactonase drp35 (324 aa).

The Ca(2+) site is built by E47, S109, G111, D129, T132, Y134, D137, N184, D235, and S236. Residue D235 is the Proton donor of the active site.

This sequence belongs to the SMP-30/CGR1 family. The cofactor is Ca(2+).

Its subcellular location is the cytoplasm. Functionally, exhibits lactonase activity. Acts in cells with perturbed membrane integrity and is possibly related to the membrane homeostasis. The protein is Lactonase drp35 (drp35) of Staphylococcus aureus (strain USA300).